Consider the following 177-residue polypeptide: Large ribosomal subunit protein uL6 (177 aa).

The protein belongs to the universal ribosomal protein uL6 family. In terms of assembly, part of the 50S ribosomal subunit.

Functionally, this protein binds to the 23S rRNA, and is important in its secondary structure. It is located near the subunit interface in the base of the L7/L12 stalk, and near the tRNA binding site of the peptidyltransferase center. The chain is Large ribosomal subunit protein uL6 from Buchnera aphidicola subsp. Acyrthosiphon kondoi (Acyrthosiphon kondoi symbiotic bacterium).